A 397-amino-acid polypeptide reads, in one-letter code: MDTLIIVGSMVTLWSEIPMDILRSVFERLSFVDLHRAKIVCSHWYSCSKQSFLRKTRSPLVILFSDDGDCTLYNPEEARVYKSKRDLSRYRFLANSGNWFLVLDPRSNLYIIDLFSEKKINLPPLDSFKGYKYNLKKVGARKFKELVSEYPTSFHHHAKDLRGLLWVDEKKEEYVVVWYFRNKYTMDSLAFCKNGEDHYREMPTHYGLHDISDMVLQRGDHIYLSTSCKYLQKLDLSRQEGIRTKNDDIISRYQLPCRPTNYKLVYDAKCWCSYNIAVTSSGEVLFVLSIFSQSTRRRIFFLYKEDPNPSPSEVIYKNLVEVDSLGDEALLLDLGITVPADSDLGIEPNSIYFTRHDRVANQKRSSPDICVFNIVTKTLKRFPGLSSLKDARWFLPS.

The F-box domain occupies 11–56 (VTLWSEIPMDILRSVFERLSFVDLHRAKIVCSHWYSCSKQSFLRKT).

This Arabidopsis thaliana (Mouse-ear cress) protein is F-box protein At5g25290.